The chain runs to 992 residues: Probable translation initiation factor IF-2 (992 aa).

The DOD-type homing endonuclease domain maps to 96–220 (KNWHGVTVTP…LSLALLRFGI (125 aa)). Residues 399-616 (TTETHNFIAN…LIAGLSQRYL (218 aa)) form the tr-type G domain. GTP is bound by residues 472-476 (DTPGH) and 526-529 (NKID).

Belongs to the TRAFAC class translation factor GTPase superfamily. Classic translation factor GTPase family. IF-2 subfamily. Post-translationally, this protein undergoes a protein self splicing that involves a post-translational excision of the intervening region (intein) followed by peptide ligation.

In terms of biological role, function in general translation initiation by promoting the binding of the formylmethionine-tRNA to ribosomes. Seems to function along with eIF-2. This chain is Probable translation initiation factor IF-2 (infB), found in Pyrococcus abyssi (strain GE5 / Orsay).